A 142-amino-acid polypeptide reads, in one-letter code: Transcription antitermination protein NusB (142 aa).

The protein belongs to the NusB family.

Involved in transcription antitermination. Required for transcription of ribosomal RNA (rRNA) genes. Binds specifically to the boxA antiterminator sequence of the ribosomal RNA (rrn) operons. The chain is Transcription antitermination protein NusB from Levilactobacillus brevis (strain ATCC 367 / BCRC 12310 / CIP 105137 / JCM 1170 / LMG 11437 / NCIMB 947 / NCTC 947) (Lactobacillus brevis).